The sequence spans 252 residues: Probable transcriptional regulatory protein Cagg_2594 (252 aa).

Residues 1-14 (MSGHSKWHTIRRAK) show a composition bias toward basic residues. The interval 1–22 (MSGHSKWHTIRRAKSANDQRRG) is disordered.

It belongs to the TACO1 family.

Its subcellular location is the cytoplasm. This Chloroflexus aggregans (strain MD-66 / DSM 9485) protein is Probable transcriptional regulatory protein Cagg_2594.